Here is a 341-residue protein sequence, read N- to C-terminus: NADH-ubiquinone oxidoreductase chain 2 (341 aa).

9 helical membrane-spanning segments follow: residues 8-28, 60-80, 95-115, 121-141, 146-166, 195-215, 238-258, 273-293, and 321-341; these read ILFITIMIIGTLITVTSNSWL, YFLTQVLASTVLLFSSILLML, MIIMSALLLKSGAAPFHFWFP, LTWMNALMLMTWQKIAPLMLI, IKYLLLISVILSVIIGAIGGL, SIWLIYFFFYSFLSFVLTFMF, FTLFMNFLSLGGLPPFLGFLP, FMLTLMMMSTLITLFFYLRIC, and MIMTFFSIFGLFLISLFYFMF.

It belongs to the complex I subunit 2 family.

The protein resides in the mitochondrion inner membrane. It catalyses the reaction a ubiquinone + NADH + 5 H(+)(in) = a ubiquinol + NAD(+) + 4 H(+)(out). In terms of biological role, core subunit of the mitochondrial membrane respiratory chain NADH dehydrogenase (Complex I) that is believed to belong to the minimal assembly required for catalysis. Complex I functions in the transfer of electrons from NADH to the respiratory chain. The immediate electron acceptor for the enzyme is believed to be ubiquinone. The sequence is that of NADH-ubiquinone oxidoreductase chain 2 (mt:ND2) from Drosophila melanogaster (Fruit fly).